Reading from the N-terminus, the 124-residue chain is Holo-[acyl-carrier-protein] synthase (124 aa).

Mg(2+) contacts are provided by D7 and E55.

Belongs to the P-Pant transferase superfamily. AcpS family. It depends on Mg(2+) as a cofactor.

Its subcellular location is the cytoplasm. The enzyme catalyses apo-[ACP] + CoA = holo-[ACP] + adenosine 3',5'-bisphosphate + H(+). Functionally, transfers the 4'-phosphopantetheine moiety from coenzyme A to a Ser of acyl-carrier-protein. The chain is Holo-[acyl-carrier-protein] synthase from Borreliella afzelii (strain PKo) (Borrelia afzelii).